Reading from the N-terminus, the 136-residue chain is Ribonuclease P protein component (136 aa).

The segment at 39-59 is disordered; it reads LPDVSSSKPARDTGAEQTSAP.

The protein belongs to the RnpA family. In terms of assembly, consists of a catalytic RNA component (M1 or rnpB) and a protein subunit.

The enzyme catalyses Endonucleolytic cleavage of RNA, removing 5'-extranucleotides from tRNA precursor.. Its function is as follows. RNaseP catalyzes the removal of the 5'-leader sequence from pre-tRNA to produce the mature 5'-terminus. It can also cleave other RNA substrates such as 4.5S RNA. The protein component plays an auxiliary but essential role in vivo by binding to the 5'-leader sequence and broadening the substrate specificity of the ribozyme. The sequence is that of Ribonuclease P protein component from Salinispora tropica (strain ATCC BAA-916 / DSM 44818 / JCM 13857 / NBRC 105044 / CNB-440).